Reading from the N-terminus, the 267-residue chain is Short-chain dehydrogenase/reductase GME11361 (267 aa).

Residues Ile-10, Thr-36, Lys-42, Asp-57, Asn-80, Tyr-129, Lys-133, Val-162, and Ser-164 each coordinate NADP(+). Tyr-129 acts as the Proton acceptor in catalysis. The active-site Lowers pKa of active site Tyr is Lys-133.

Belongs to the short-chain dehydrogenases/reductases (SDR) family.

Its pathway is secondary metabolite biosynthesis. In terms of biological role, short-chain dehydrogenase/reductase; part of the gene cluster that mediates the biosynthesis of dibenzodioxocinones such as pestalotiollide B, a novel class of inhibitors against cholesterol ester transfer protein (CEPT). The biosynthesis initiates from condensation of acetate and malonate units catalyzed by the non-reducing PKS pks8/GME11356. Pks8/GME11356 lacks a thioesterase (TE) domain, which is important to the cyclizing of the third ring of atrochrysone carboxylic acid, and the esterase GME11355 might play the role of TE and catalyzes the cyclization reaction of the C ring. The lactamase-like protein GME11357 (or other beta-lactamases in Pestalotiopsis microspora) probably hydrolyzes the thioester bond between the ACP of pks8/GME11356 and the intermediate to release atrochrysone carboxylic acid, which is spontaneously dehydrates to form endocrocin anthrone. Endocrocin anthrone is further converted to emodin via the endocrocin intermediate. Emodin is then oxidized by several enzymes such as the Baeyer-Villiger oxidase GME11358, the oxidoreductase GME11367, the short chain dehydrogenase/reductase GME11373, as well as by other oxidoreductases from the cluster, to modify the A and C rings and open the B ring, and finally yield monodictyphenone. The prenyltransferase GME11375 may catalyze the addition reaction between the C5 side chains and the carbon bone of dibenzodioxocinones. The remaining biochemical reactions to the final product dibenzodioxocinones should be methylation catalyzed by methyltransferase GME11366 and reduction and lactonization reaction catalyzed by a series of oxidordeuctases. The chain is Short-chain dehydrogenase/reductase GME11361 from Pestalotiopsis microspora.